The chain runs to 149 residues: Calmodulin (149 aa).

Alanine 2 bears the N-acetylalanine mark. 4 consecutive EF-hand domains span residues 8-43, 44-79, 81-116, and 117-149; these read EQIS…LGQN, PTEA…KMRD, DSEE…LGEK, and LTDN…MLSK. The Ca(2+) site is built by aspartate 21, aspartate 23, aspartate 25, threonine 27, glutamate 32, aspartate 57, aspartate 59, asparagine 61, threonine 63, glutamate 68, aspartate 94, aspartate 96, asparagine 98, tyrosine 100, glutamate 105, aspartate 130, aspartate 132, aspartate 134, glutamine 136, and glutamate 141.

Belongs to the calmodulin family.

Functionally, calmodulin mediates the control of a large number of enzymes, ion channels and other proteins by Ca(2+). Among the enzymes to be stimulated by the calmodulin-Ca(2+) complex are a number of protein kinases and phosphatases. The chain is Calmodulin (CMD1) from Pleurotus ostreatus (Oyster mushroom).